We begin with the raw amino-acid sequence, 183 residues long: MLDLVAKKLFLTRGKGIHEDRLTSFEYALRDAGIAGTNLVLISSIFPPKAKLISRKEGLQQIKPGQILFTIYSKNQTNEPHRMCSASVGIAQPKDKDRYGYLSEYEAFGQTETQAGDYAEDIAAQMLASSLGIPFDVDKNWDEKRQQWKISGEIYKTQNITQQTRGDKDGKWTTVFAAAVLLV.

Serine 44 carries the pyruvic acid (Ser) modification.

It belongs to the PdaD family. Pyruvate serves as cofactor.

It catalyses the reaction L-arginine + H(+) = agmatine + CO2. The polypeptide is Pyruvoyl-dependent arginine decarboxylase (Nitrosopumilus maritimus (strain SCM1)).